We begin with the raw amino-acid sequence, 107 residues long: Large ribosomal subunit protein uL24 (107 aa).

The protein belongs to the universal ribosomal protein uL24 family. As to quaternary structure, part of the 50S ribosomal subunit.

Functionally, one of two assembly initiator proteins, it binds directly to the 5'-end of the 23S rRNA, where it nucleates assembly of the 50S subunit. Its function is as follows. One of the proteins that surrounds the polypeptide exit tunnel on the outside of the subunit. The sequence is that of Large ribosomal subunit protein uL24 from Caldanaerobacter subterraneus subsp. tengcongensis (strain DSM 15242 / JCM 11007 / NBRC 100824 / MB4) (Thermoanaerobacter tengcongensis).